A 397-amino-acid polypeptide reads, in one-letter code: Probable sugar efflux transporter (397 aa).

Helical transmembrane passes span 15–35 (VIVM…PVAL), 51–71 (GLMI…CMLM), 80–100 (LLIS…FAWN), 103–123 (VLLI…SITA), 137–157 (QALG…LPLG), 169–189 (TFTL…RLLP), 209–229 (PMLI…FTAY), 246–266 (KATA…VLFS), 277–297 (LLSS…VSGI), 299–319 (GAIF…SLAM), 333–353 (VATA…ALIG), and 365–385 (IGYV…LMFL).

This sequence belongs to the major facilitator superfamily. SotB (TC 2.A.1.2) family.

The protein resides in the cell inner membrane. Functionally, involved in the efflux of sugars. The physiological role may be the reduction of the intracellular concentration of toxic sugars or sugar metabolites. The chain is Probable sugar efflux transporter from Mannheimia succiniciproducens (strain KCTC 0769BP / MBEL55E).